The sequence spans 515 residues: Bifunctional purine biosynthesis protein PurH (515 aa).

In terms of domain architecture, MGS-like spans 1 to 145 (MTKRALISVS…KNHASVTVVV (145 aa)).

This sequence belongs to the PurH family.

It catalyses the reaction (6R)-10-formyltetrahydrofolate + 5-amino-1-(5-phospho-beta-D-ribosyl)imidazole-4-carboxamide = 5-formamido-1-(5-phospho-D-ribosyl)imidazole-4-carboxamide + (6S)-5,6,7,8-tetrahydrofolate. The catalysed reaction is IMP + H2O = 5-formamido-1-(5-phospho-D-ribosyl)imidazole-4-carboxamide. Its pathway is purine metabolism; IMP biosynthesis via de novo pathway; 5-formamido-1-(5-phospho-D-ribosyl)imidazole-4-carboxamide from 5-amino-1-(5-phospho-D-ribosyl)imidazole-4-carboxamide (10-formyl THF route): step 1/1. It functions in the pathway purine metabolism; IMP biosynthesis via de novo pathway; IMP from 5-formamido-1-(5-phospho-D-ribosyl)imidazole-4-carboxamide: step 1/1. This chain is Bifunctional purine biosynthesis protein PurH, found in Streptococcus suis.